Consider the following 277-residue polypeptide: Small ribosomal subunit protein uS2 (277 aa).

The span at 228-241 (YEERLQAETDKDAE) shows a compositional bias: basic and acidic residues. The disordered stretch occupies residues 228 to 277 (YEERLQAETDKDAESSTVQQEENPEADIPESIETKESVSAAADSDLDENE).

This sequence belongs to the universal ribosomal protein uS2 family.

This Syntrophus aciditrophicus (strain SB) protein is Small ribosomal subunit protein uS2.